A 122-amino-acid chain; its full sequence is Small ribosomal subunit protein bS6 (122 aa).

Belongs to the bacterial ribosomal protein bS6 family.

In terms of biological role, binds together with bS18 to 16S ribosomal RNA. This Neisseria meningitidis serogroup B (strain ATCC BAA-335 / MC58) protein is Small ribosomal subunit protein bS6 (rpsF).